The chain runs to 130 residues: Small ribosomal subunit protein uS8 (130 aa).

Belongs to the universal ribosomal protein uS8 family. Part of the 30S ribosomal subunit. Contacts proteins S5 and S12.

Its function is as follows. One of the primary rRNA binding proteins, it binds directly to 16S rRNA central domain where it helps coordinate assembly of the platform of the 30S subunit. In Actinobacillus pleuropneumoniae serotype 5b (strain L20), this protein is Small ribosomal subunit protein uS8.